The chain runs to 466 residues: Soluble pyridine nucleotide transhydrogenase (466 aa).

36–45 (ERYNNVGGGC) contacts FAD.

It belongs to the class-I pyridine nucleotide-disulfide oxidoreductase family. FAD serves as cofactor.

The protein localises to the cytoplasm. The enzyme catalyses NAD(+) + NADPH = NADH + NADP(+). In terms of biological role, conversion of NADPH, generated by peripheral catabolic pathways, to NADH, which can enter the respiratory chain for energy generation. The chain is Soluble pyridine nucleotide transhydrogenase from Yersinia enterocolitica serotype O:8 / biotype 1B (strain NCTC 13174 / 8081).